Consider the following 454-residue polypeptide: tRNA modification GTPase MnmE (454 aa).

Residues Arg-23, Glu-80, and Lys-120 each contribute to the (6S)-5-formyl-5,6,7,8-tetrahydrofolate site. The TrmE-type G domain occupies 216–377; that stretch reads GMKVVIAGRP…LRDHLKQSMG (162 aa). Asn-226 serves as a coordination point for K(+). GTP-binding positions include 226–231, 245–251, 270–273, 335–338, and 358–360; these read NAGKSS, TDIAGTT, DTAG, NKAD, and SAR. Ser-230 is a binding site for Mg(2+). Thr-245, Ile-247, and Thr-250 together coordinate K(+). Position 251 (Thr-251) interacts with Mg(2+). Lys-454 provides a ligand contact to (6S)-5-formyl-5,6,7,8-tetrahydrofolate.

This sequence belongs to the TRAFAC class TrmE-Era-EngA-EngB-Septin-like GTPase superfamily. TrmE GTPase family. Homodimer. Heterotetramer of two MnmE and two MnmG subunits. K(+) is required as a cofactor.

It localises to the cytoplasm. In terms of biological role, exhibits a very high intrinsic GTPase hydrolysis rate. Involved in the addition of a carboxymethylaminomethyl (cmnm) group at the wobble position (U34) of certain tRNAs, forming tRNA-cmnm(5)s(2)U34. In Serratia proteamaculans (strain 568), this protein is tRNA modification GTPase MnmE.